The following is a 278-amino-acid chain: Putative peptidase Cgl1093 (278 aa).

A signal peptide spans 1–32; sequence MSSASFTTKALSVLAALTAASAPLVAASPAHA. The Peptidase S1 domain maps to 33–236; sequence LANARNVTGS…HAEWIAYYTG (204 aa). C59 and C75 are joined by a disulfide. Catalysis depends on charge relay system residues H74, D123, and S189.

The protein belongs to the peptidase S1 family.

Its subcellular location is the secreted. The polypeptide is Putative peptidase Cgl1093 (Corynebacterium glutamicum (strain ATCC 13032 / DSM 20300 / JCM 1318 / BCRC 11384 / CCUG 27702 / LMG 3730 / NBRC 12168 / NCIMB 10025 / NRRL B-2784 / 534)).